The primary structure comprises 56 residues: UPF0434 protein CbuG_1535 (56 aa).

This sequence belongs to the UPF0434 family.

This is UPF0434 protein CbuG_1535 from Coxiella burnetii (strain CbuG_Q212) (Coxiella burnetii (strain Q212)).